We begin with the raw amino-acid sequence, 145 residues long: UPF0735 ACT domain-containing protein CLD_1535 (145 aa).

The region spanning 69-144 (TIGLLLGHER…NVIKVDLIAM (76 aa)) is the ACT domain.

This sequence belongs to the UPF0735 family.

The chain is UPF0735 ACT domain-containing protein CLD_1535 from Clostridium botulinum (strain Okra / Type B1).